Consider the following 483-residue polypeptide: Krueppel-like factor 4 (483 aa).

The segment at 22–42 (TFASGPAGREKTLRPAGAPTN) is disordered. Residue Lys-32 forms a Glycyl lysine isopeptide (Lys-Gly) (interchain with G-Cter in ubiquitin) linkage. Residues 99-107 (DLLDLDFIL) carry the 9aaTAD motif. Ser-251 is modified (phosphoserine). A disordered region spans residues 294–395 (AGPQLSNGHR…KRGRRSWPRK (102 aa)). A compositionally biased stretch (pro residues) spans 338–356 (LPLPPGFHPHPGPNYPPFL). Glu-381 is modified (5-glutamyl polyglutamate). Over residues 386 to 395 (KRGRRSWPRK) the composition is skewed to basic residues. The segment at 386–483 (KRGRRSWPRK…HLALHMKRHF (98 aa)) is interaction with ZNF296. 3 consecutive C2H2-type zinc fingers follow at residues 400–424 (HTCDYAGCGKTYTKSSHLKAHLRTH), 430–454 (YHCDWDGCGWKFARSDELTRHYRKH), and 460–482 (FQCQKCDRAFSRSDHLALHMKRH). The interaction with target DNA stretch occupies residues 443–474 (RSDELTRHYRKHTGHRPFQCQKCDRAFSRSDH).

The protein belongs to the krueppel C2H2-type zinc-finger protein family. Interacts with MUC1 (via the C-terminal domain). Interacts with POU5F1/OCT4 and SOX2. Interacts with MEIS2 isoform MeisD and PBX1 isoform PBX1a. Interacts with ZNF296. Interacts with GLIS1. Interacts with BTRC; this interaction leads to KLF4 ubiquitination and subsequent degradation. Interacts with IPO7; the interaction facilitates nuclear translocation of KLF4 in dental papilla cells. Post-translationally, ubiquitinated. 'Lys-48'-linked ubiquitinated and targeted for proteasomal degradation by the SCF(BTRC) E3 ubiquitin-protein ligase complex, thereby negatively regulating cell pluripotency maintenance and embryogenesis. Polyglutamylated by TTLL1 and TTLL4 at Glu-381, which inhibits KLF4 binding with E3 ligase component BTRC, thereby impeding ubiquitination. Deglutamylated by CCP1 and CCP6; deglutamylation promotes KLF4 ubiquitination. KLF4 glutamylation state plays a critical role in the regulation of its function in cell reprogramming, pluripotency maintenance and embryogenesis. Highest expression in the colon. Lower levels in testis, lung and small intestine.

Its subcellular location is the nucleus. The protein resides in the cytoplasm. In terms of biological role, transcription factor; can act both as activator and as repressor. Binds the 5'-CACCC-3' core sequence. Binds to the promoter region of its own gene and can activate its own transcription. Regulates the expression of key transcription factors during embryonic development. Plays an important role in maintaining embryonic stem cells, and in preventing their differentiation. Required for establishing the barrier function of the skin and for postnatal maturation and maintenance of the ocular surface. Involved in the differentiation of epithelial cells and may also function in skeletal and kidney development. Contributes to the down-regulation of p53/TP53 transcription. This Mus musculus (Mouse) protein is Krueppel-like factor 4 (Klf4).